The following is a 338-amino-acid chain: MKKEFDFILIGRITIDFNPTDYYNNLENSSLFKKYIGGSAANIAIGLSRLKNKVGFFGSVSDDQFGNFVLNVFENEKIDISHIKKTKDHKLGLTFTEMLSEEKSTILMYRDNVADLQIDVSDIDLDYILRTKILVISGTSLAKSPSREAVLKALFLAKNNGIKVVFDIDYRPYSWKNLDEVSLYYQIVAQNSDLIIGSYEEIQLTSRFCLENPENLIDDDYAKYWLKFVDLIIIKNGKKGSKLYQKDKKLVAKIVPVKMLKGYGGGDAYASLFLDHYLKNESDLENGLALATSAASIMVQSHSSFDLPDYQKILEFKDNALKSDPDLVQKKEWNAFKK.

This sequence belongs to the carbohydrate kinase PfkB family.

It carries out the reaction 5-dehydro-2-deoxy-D-gluconate + ATP = 6-phospho-5-dehydro-2-deoxy-D-gluconate + ADP + H(+). The protein operates within polyol metabolism; myo-inositol degradation into acetyl-CoA; acetyl-CoA from myo-inositol: step 5/7. Its function is as follows. Catalyzes the phosphorylation of 5-dehydro-2-deoxy-D-gluconate (2-deoxy-5-keto-D-gluconate or DKG) to 6-phospho-5-dehydro-2-deoxy-D-gluconate (DKGP). The sequence is that of 5-dehydro-2-deoxygluconokinase from Mesomycoplasma hyopneumoniae (strain 7448) (Mycoplasma hyopneumoniae).